Reading from the N-terminus, the 462-residue chain is L-seryl-tRNA(Sec) selenium transferase (462 aa).

At K293 the chain carries N6-(pyridoxal phosphate)lysine.

Belongs to the SelA family. The cofactor is pyridoxal 5'-phosphate.

The protein resides in the cytoplasm. It carries out the reaction L-seryl-tRNA(Sec) + selenophosphate + H(+) = L-selenocysteinyl-tRNA(Sec) + phosphate. It functions in the pathway aminoacyl-tRNA biosynthesis; selenocysteinyl-tRNA(Sec) biosynthesis; selenocysteinyl-tRNA(Sec) from L-seryl-tRNA(Sec) (bacterial route): step 1/1. Its function is as follows. Converts seryl-tRNA(Sec) to selenocysteinyl-tRNA(Sec) required for selenoprotein biosynthesis. In Clostridium botulinum (strain Loch Maree / Type A3), this protein is L-seryl-tRNA(Sec) selenium transferase.